Reading from the N-terminus, the 470-residue chain is UDP-N-acetylmuramate--L-alanine ligase (470 aa).

118-124 (GTHGKTT) provides a ligand contact to ATP.

It belongs to the MurCDEF family.

The protein localises to the cytoplasm. It carries out the reaction UDP-N-acetyl-alpha-D-muramate + L-alanine + ATP = UDP-N-acetyl-alpha-D-muramoyl-L-alanine + ADP + phosphate + H(+). The protein operates within cell wall biogenesis; peptidoglycan biosynthesis. Its function is as follows. Cell wall formation. This is UDP-N-acetylmuramate--L-alanine ligase from Cereibacter sphaeroides (strain ATCC 17025 / ATH 2.4.3) (Rhodobacter sphaeroides).